Here is a 79-residue protein sequence, read N- to C-terminus: MKSLVIVFVVLLGVAMISANEEELLAILQDQRNDARGGCMNRYKSNICGTLVTPMNCIAPRTRMGKFARKFCQFMCGIC.

Positions M1–A19 are cleaved as a signal peptide. Residues N20 to R36 constitute a propeptide that is removed on maturation.

It belongs to the sea anemone 8 toxin family.

It localises to the secreted. The protein localises to the nematocyst. This Anemonia viridis (Snakelocks anemone) protein is U-actitoxin-Avd8a.